Reading from the N-terminus, the 85-residue chain is Toxin AahP1005 (85 aa).

Positions 1–19 (MNYLVMISLALLFMTGVES) are cleaved as a signal peptide. Positions 21-83 (KDGYIVDDKN…VSTKKKGGCN (63 aa)) constitute an LCN-type CS-alpha/beta domain. Cystine bridges form between C31–C82, C35–C55, C41–C65, and C45–C67. Position 83 is an asparagine amide (N83).

This sequence belongs to the long (4 C-C) scorpion toxin superfamily. Sodium channel inhibitor family. Alpha subfamily. In terms of tissue distribution, expressed by the venom gland.

Its subcellular location is the secreted. Its function is as follows. Alpha toxins bind voltage-independently at site-3 of sodium channels (Nav) and inhibit the inactivation of the activated channels, thereby blocking neuronal transmission. This is Toxin AahP1005 from Androctonus australis (Sahara scorpion).